The primary structure comprises 334 residues: GTP 3',8-cyclase (334 aa).

Positions 13–239 (RFQRKFYYLR…KARADNDGPA (227 aa)) constitute a Radical SAM core domain. Position 22 (arginine 22) interacts with GTP. [4Fe-4S] cluster-binding residues include cysteine 29 and cysteine 33. Tyrosine 35 is an S-adenosyl-L-methionine binding site. Cysteine 36 is a [4Fe-4S] cluster binding site. Arginine 73 lines the GTP pocket. Glycine 77 is a binding site for S-adenosyl-L-methionine. Threonine 104 lines the GTP pocket. Residue serine 128 coordinates S-adenosyl-L-methionine. A GTP-binding site is contributed by lysine 165. Methionine 199 serves as a coordination point for S-adenosyl-L-methionine. [4Fe-4S] cluster-binding residues include cysteine 262 and cysteine 265. 267–269 (RLR) provides a ligand contact to GTP. Cysteine 279 contacts [4Fe-4S] cluster.

It belongs to the radical SAM superfamily. MoaA family. As to quaternary structure, monomer and homodimer. Requires [4Fe-4S] cluster as cofactor.

It catalyses the reaction GTP + AH2 + S-adenosyl-L-methionine = (8S)-3',8-cyclo-7,8-dihydroguanosine 5'-triphosphate + 5'-deoxyadenosine + L-methionine + A + H(+). It functions in the pathway cofactor biosynthesis; molybdopterin biosynthesis. In terms of biological role, catalyzes the cyclization of GTP to (8S)-3',8-cyclo-7,8-dihydroguanosine 5'-triphosphate. In Vibrio cholerae serotype O1 (strain M66-2), this protein is GTP 3',8-cyclase.